A 195-amino-acid polypeptide reads, in one-letter code: Thioredoxin reductase-like selenoprotein T (195 aa).

The first 19 residues, 1 to 19, serve as a signal peptide directing secretion; sequence MRLLLLLLVAASAVVRSDA. The segment at residues 46–49 is a cross-link (cysteinyl-selenocysteine (Cys-Sec)); that stretch reads CVSU. Residue Sec49 is a non-standard amino acid, selenocysteine. The chain crosses the membrane as a helical span at residues 85–103; the sequence is IASFLSVFKLVLIGLIIVG.

Belongs to the SelWTH family. Selenoprotein T subfamily. May contain a selenide-sulfide bond between Cys-46 and Sec-49. This bond is speculated to serve as redox-active pair.

It localises to the endoplasmic reticulum membrane. It catalyses the reaction [thioredoxin]-dithiol + NADP(+) = [thioredoxin]-disulfide + NADPH + H(+). Functionally, selenoprotein with thioredoxin reductase-like oxidoreductase activity. Protects dopaminergic neurons against oxidative stress and cell death. Involved in ADCYAP1/PACAP-induced calcium mobilization and neuroendocrine secretion. Plays a role in fibroblast anchorage and redox regulation. In gastric smooth muscle, modulates the contraction processes through the regulation of calcium release and MYLK activation. In pancreatic islets, involved in the control of glucose homeostasis, contributes to prolonged ADCYAP1/PACAP-induced insulin secretion. The chain is Thioredoxin reductase-like selenoprotein T from Bos taurus (Bovine).